The sequence spans 242 residues: MSFYGSRYFGDIVHGELGKDLFRYHGFVMMVAVAVLVFVMYMGCVILFTKFSYRHFLNRQRLEFWWTIVPMLMLVGLWXPSMINLYYMEEVKRPRWNFKAIGKQWYWSYEFCRNLDTPSSSESAESISCYTIDSYMEDQQETFSKGGYRLLDVDNRMVAPADVQMTAFVSSSDVLHSFALPKLLIKVDAIPGRINRLPMKASQCSIIYGQCSEICGVNHSFMPIVIEFIPEKYFVMWLEALN.

Topologically, residues 1-30 are mitochondrial intermembrane; sequence MSFYGSRYFGDIVHGELGKDLFRYHGFVMM. Residues 31–47 form a helical membrane-spanning segment; it reads VAVAVLVFVMYMGCVIL. The Mitochondrial matrix portion of the chain corresponds to 48-66; that stretch reads FTKFSYRHFLNRQRLEFWW. A helical transmembrane segment spans residues 67–83; sequence TIVPMLMLVGLWXPSMI. The Mitochondrial intermembrane portion of the chain corresponds to 84–242; the sequence is NLYYMEEVKR…YFVMWLEALN (159 aa). Residues H176, C211, E213, C215, H219, and M222 each coordinate Cu cation. E213 is a Mg(2+) binding site.

It belongs to the cytochrome c oxidase subunit 2 family. Component of the cytochrome c oxidase (complex IV, CIV), a multisubunit enzyme composed of a catalytic core of 3 subunits and several supernumerary subunits. The complex exists as a monomer or a dimer and forms supercomplexes (SCs) in the inner mitochondrial membrane with ubiquinol-cytochrome c oxidoreductase (cytochrome b-c1 complex, complex III, CIII). Cu cation is required as a cofactor.

It is found in the mitochondrion inner membrane. The enzyme catalyses 4 Fe(II)-[cytochrome c] + O2 + 8 H(+)(in) = 4 Fe(III)-[cytochrome c] + 2 H2O + 4 H(+)(out). Component of the cytochrome c oxidase, the last enzyme in the mitochondrial electron transport chain which drives oxidative phosphorylation. The respiratory chain contains 3 multisubunit complexes succinate dehydrogenase (complex II, CII), ubiquinol-cytochrome c oxidoreductase (cytochrome b-c1 complex, complex III, CIII) and cytochrome c oxidase (complex IV, CIV), that cooperate to transfer electrons derived from NADH and succinate to molecular oxygen, creating an electrochemical gradient over the inner membrane that drives transmembrane transport and the ATP synthase. Cytochrome c oxidase is the component of the respiratory chain that catalyzes the reduction of oxygen to water. Electrons originating from reduced cytochrome c in the intermembrane space (IMS) are transferred via the dinuclear copper A center (CU(A)) of subunit 2 and heme A of subunit 1 to the active site in subunit 1, a binuclear center (BNC) formed by heme A3 and copper B (CU(B)). The BNC reduces molecular oxygen to 2 water molecules using 4 electrons from cytochrome c in the IMS and 4 protons from the mitochondrial matrix. The polypeptide is Cytochrome c oxidase subunit 2 (COII) (Mytilus edulis (Blue mussel)).